We begin with the raw amino-acid sequence, 125 residues long: Photosystem I reaction center subunit IV, chloroplastic (125 aa).

The N-terminal 34 residues, 1-34, are a transit peptide targeting the chloroplast; it reads MASIASSVAVRLGLTQVLPNKNFSSPRSTRLVVR. Residues 42 to 57 are compositionally biased toward low complexity; that stretch reads APAAASPEGEAPKAAA. A disordered region spans residues 42–68; that stretch reads APAAASPEGEAPKAAAKPPPIGPKRGS.

Belongs to the PsaE family.

The protein resides in the plastid. It localises to the chloroplast thylakoid membrane. Its function is as follows. Stabilizes the interaction between PsaC and the PSI core, assists the docking of the ferredoxin to PSI and interacts with ferredoxin-NADP oxidoreductase. This Spinacia oleracea (Spinach) protein is Photosystem I reaction center subunit IV, chloroplastic (PSAE-1).